Here is a 455-residue protein sequence, read N- to C-terminus: Bifunctional protein GlmU (455 aa).

A pyrophosphorylase region spans residues 1–228; sequence MYKCALVLAA…YEETIGVNSR (228 aa). UDP-N-acetyl-alpha-D-glucosamine is bound by residues 8-11, K22, Q73, and 78-79; these read LAAG and GT. Residue D103 participates in Mg(2+) binding. Residues G140, E154, N169, and N226 each coordinate UDP-N-acetyl-alpha-D-glucosamine. N226 serves as a coordination point for Mg(2+). A linker region spans residues 229 to 249; it reads VQLAEAEEILKNRINLMHMEN. An N-acetyltransferase region spans residues 250 to 455; it reads GVTLIDPRTT…GWVDKKGLKK (206 aa). R331 and K349 together coordinate UDP-N-acetyl-alpha-D-glucosamine. H361 serves as the catalytic Proton acceptor. UDP-N-acetyl-alpha-D-glucosamine-binding residues include Y364 and N375. Residues 384–385, A421, and R438 each bind acetyl-CoA; that span reads NY.

It in the N-terminal section; belongs to the N-acetylglucosamine-1-phosphate uridyltransferase family. In the C-terminal section; belongs to the transferase hexapeptide repeat family. In terms of assembly, homotrimer. It depends on Mg(2+) as a cofactor.

The protein resides in the cytoplasm. It catalyses the reaction alpha-D-glucosamine 1-phosphate + acetyl-CoA = N-acetyl-alpha-D-glucosamine 1-phosphate + CoA + H(+). It carries out the reaction N-acetyl-alpha-D-glucosamine 1-phosphate + UTP + H(+) = UDP-N-acetyl-alpha-D-glucosamine + diphosphate. It participates in nucleotide-sugar biosynthesis; UDP-N-acetyl-alpha-D-glucosamine biosynthesis; N-acetyl-alpha-D-glucosamine 1-phosphate from alpha-D-glucosamine 6-phosphate (route II): step 2/2. Its pathway is nucleotide-sugar biosynthesis; UDP-N-acetyl-alpha-D-glucosamine biosynthesis; UDP-N-acetyl-alpha-D-glucosamine from N-acetyl-alpha-D-glucosamine 1-phosphate: step 1/1. It functions in the pathway bacterial outer membrane biogenesis; LPS lipid A biosynthesis. Functionally, catalyzes the last two sequential reactions in the de novo biosynthetic pathway for UDP-N-acetylglucosamine (UDP-GlcNAc). The C-terminal domain catalyzes the transfer of acetyl group from acetyl coenzyme A to glucosamine-1-phosphate (GlcN-1-P) to produce N-acetylglucosamine-1-phosphate (GlcNAc-1-P), which is converted into UDP-GlcNAc by the transfer of uridine 5-monophosphate (from uridine 5-triphosphate), a reaction catalyzed by the N-terminal domain. This Clostridium beijerinckii (strain ATCC 51743 / NCIMB 8052) (Clostridium acetobutylicum) protein is Bifunctional protein GlmU.